Reading from the N-terminus, the 1430-residue chain is Caskin-1 (1430 aa).

6 ANK repeats span residues 48-77 (DGFSALHHAALNGNTELISLLLEAQAAVDI), 81-110 (KGMRPLHYAAWQGRKEPMKLVLKAGSAVNV), 114-143 (EGHIPLHLAAQHGHYDVSEMLLQHQSNPCI), 147-176 (SGKTPLDLACEFGRVGVVQLLLSSNMCAAL), 188-217 (NGTSPLHLAAKNGHIDIIRLLLQAGIDINR), and 220-249 (KSGTALHEAALCGKTEVVRLLLDSGINAQV). At Y253 the chain carries Phosphotyrosine. Residues 281 to 347 (SAALQVRATK…PSSLGEAIVK (67 aa)) enclose the SH3 domain. A disordered region spans residues 348–372 (RAGSRTGSEPSPPQGGGSLGPSAPP). A Phosphoserine modification is found at S358. A CASK-binding region spans residues 375-471 (IWVLRKPFAG…PKKLESSSAS (97 aa)). Residue R398 is modified to Omega-N-methylarginine. Polar residues predominate over residues 421–430 (QKSVSESSPG). The segment at 421-472 (QKSVSESSPGDSPVKPPEGSSGAARSQPPAAHAGQVYGEQPPKKLESSSASE) is disordered. Residues S423 and S432 each carry the phosphoserine modification. SAM domains are found at residues 474–537 (KSAE…LNIP) and 543–607 (HKPA…LAEL). Phosphoserine occurs at positions 635 and 648. A compositionally biased stretch (low complexity) spans 667-679 (LSGPAEAGAAAAE). 4 disordered regions span residues 667 to 1001 (LSGP…SAGS), 1015 to 1040 (GGGGRAIRRPPEGHPTPRPASPDPGR), 1055 to 1371 (GPDG…RQKL), and 1388 to 1407 (KIRQEDGQGPRPSSIEEKST). Polar residues predominate over residues 683–711 (NHLPATPRTTSRQESSLSGRARHMSSSQE). Phosphoserine occurs at positions 722 and 727. At T740 the chain carries Phosphothreonine. S790 is subject to Phosphoserine. Over residues 847 to 859 (PPAPGPVPPPVPA) the composition is skewed to pro residues. 3 positions are modified to phosphoserine: S890, S892, and S988. Over residues 1027-1036 (GHPTPRPASP) the composition is skewed to pro residues. Phosphothreonine is present on T1066. S1068 is subject to Phosphoserine. Over residues 1147–1159 (DTVKRRPKAKEPD) the composition is skewed to basic and acidic residues. Residues 1190–1214 (PELPPPPPPAEPPPTDLMPLPPLPL) are compositionally biased toward pro residues. A Phosphoserine modification is found at S1258. T1267 is modified (phosphothreonine). The span at 1267 to 1282 (TPPPVSPKPPPPPTAP) shows a compositional bias: pro residues. Low complexity-rich tracts occupy residues 1283–1298 (KPAKALAGLQSSSATP), 1308–1326 (PPAALIKPASSPPSQSASP), and 1344–1358 (PRAAASVVSGPPVAS). S1362 carries the post-translational modification Phosphoserine. Positions 1388–1406 (KIRQEDGQGPRPSSIEEKS) are enriched in basic and acidic residues.

Polymerizes, via the tandem SAM domains, to form long, 8 nM wide fibers, upon which other proteins can assemble. Binds the CaM kinase domain of CASK. Forms a ternary complex with CASK and LIN7A, LIN7B or LIN7C. Competes with APBA1 that forms a similar complex with CASK and LIN7 proteins. The tripartite complex CASKIN1/CASK/LIN7(A/B/C) binds the cytoplasmic tail of NRXN1. Expressed in brain. Localized primarily to the neuropil and enriched in synaptic areas (at protein level).

It localises to the cytoplasm. Its function is as follows. May link the scaffolding protein CASK to downstream intracellular effectors. This is Caskin-1 (Caskin1) from Rattus norvegicus (Rat).